The following is a 491-amino-acid chain: Probable cytosol aminopeptidase (491 aa).

Residues Lys-261 and Asp-266 each coordinate Mn(2+). Lys-273 is an active-site residue. Residues Asp-284, Asp-343, and Glu-345 each contribute to the Mn(2+) site. Arg-347 is a catalytic residue.

The protein belongs to the peptidase M17 family. It depends on Mn(2+) as a cofactor.

The protein resides in the cytoplasm. It carries out the reaction Release of an N-terminal amino acid, Xaa-|-Yaa-, in which Xaa is preferably Leu, but may be other amino acids including Pro although not Arg or Lys, and Yaa may be Pro. Amino acid amides and methyl esters are also readily hydrolyzed, but rates on arylamides are exceedingly low.. The catalysed reaction is Release of an N-terminal amino acid, preferentially leucine, but not glutamic or aspartic acids.. In terms of biological role, presumably involved in the processing and regular turnover of intracellular proteins. Catalyzes the removal of unsubstituted N-terminal amino acids from various peptides. This chain is Probable cytosol aminopeptidase, found in Stenotrophomonas maltophilia (strain K279a).